A 185-amino-acid polypeptide reads, in one-letter code: ATP synthase subunit delta (185 aa).

This sequence belongs to the ATPase delta chain family. As to quaternary structure, F-type ATPases have 2 components, F(1) - the catalytic core - and F(0) - the membrane proton channel. F(1) has five subunits: alpha(3), beta(3), gamma(1), delta(1), epsilon(1). CF(0) has four main subunits: a(1), b(1), b'(1) and c(10-14). The alpha and beta chains form an alternating ring which encloses part of the gamma chain. F(1) is attached to F(0) by a central stalk formed by the gamma and epsilon chains, while a peripheral stalk is formed by the delta, b and b' chains.

It localises to the cell inner membrane. Its function is as follows. F(1)F(0) ATP synthase produces ATP from ADP in the presence of a proton or sodium gradient. F-type ATPases consist of two structural domains, F(1) containing the extramembraneous catalytic core and F(0) containing the membrane proton channel, linked together by a central stalk and a peripheral stalk. During catalysis, ATP synthesis in the catalytic domain of F(1) is coupled via a rotary mechanism of the central stalk subunits to proton translocation. This protein is part of the stalk that links CF(0) to CF(1). It either transmits conformational changes from CF(0) to CF(1) or is implicated in proton conduction. The protein is ATP synthase subunit delta of Gloeobacter violaceus (strain ATCC 29082 / PCC 7421).